A 358-amino-acid chain; its full sequence is MAAEAWLWRWGWGWGQRCPGRPGLPGPGPSPTTFLHLLLLLGPVAADITDGNSEHLKREHSLIKPYQGVGSSSMPLWDFQGSTMLTSQYVRLTPDERSKEGSIWNHQPCFLKDWEMHVHFKVHGTGKKNLHGDGIALWYTRDRLVPGPVFGSKDNFHGLAIFLDTYPNDETTERVFPYISVMVNNGSLSYDHSKDGRWSELAGCTADFRNRDHDTFLAVRYSRGRLTVMTDLEDKNEWKNCIDITGVRLPTGYYFGASAGTGDLSDNHDIISIKLFQLTVERTPEEESIDWTKIEPGVNFLKSPKDNVDDPTGNFRNGPLTGWRVFLLLLCALLGVVVCAVVGAVVFQKRQERNKRFY.

Residues 1-46 form the signal peptide; it reads MAAEAWLWRWGWGWGQRCPGRPGLPGPGPSPTTFLHLLLLLGPVAA. Residues 47 to 324 lie on the Lumenal side of the membrane; sequence DITDGNSEHL…FRNGPLTGWR (278 aa). The L-type lectin-like domain maps to 54 to 278; sequence EHLKREHSLI…DIISIKLFQL (225 aa). 2 residues coordinate a carbohydrate: Ser98 and Asp133. Ca(2+) contacts are provided by Asp164, Tyr166, and Asn168. 166 to 168 is an a carbohydrate binding site; sequence YPN. The N-linked (GlcNAc...) asparagine glycan is linked to Asn185. Residue His192 coordinates a carbohydrate. Asp195 is a Ca(2+) binding site. Cysteines 204 and 241 form a disulfide. 262-264 is a binding site for a carbohydrate; that stretch reads GDL. A helical membrane pass occupies residues 325-347; that stretch reads VFLLLLCALLGVVVCAVVGAVVF. Residues 348–358 lie on the Cytoplasmic side of the membrane; sequence QKRQERNKRFY.

The cofactor is Ca(2+).

It is found in the golgi apparatus membrane. Functionally, plays a role as an intracellular lectin in the early secretory pathway. Interacts with N-acetyl-D-galactosamine and high-mannose type glycans and may also bind to O-linked glycans. Involved in the transport and sorting of glycoproteins carrying high mannose-type glycans. This chain is Vesicular integral-membrane protein VIP36 (Lman2), found in Mus musculus (Mouse).